The chain runs to 358 residues: Serine/threonine-protein phosphatase 2A activator 2 (358 aa).

Belongs to the PTPA-type PPIase family.

It is found in the cytoplasm. It catalyses the reaction [protein]-peptidylproline (omega=180) = [protein]-peptidylproline (omega=0). Functionally, PPIases accelerate the folding of proteins. It catalyzes the cis-trans isomerization of proline imidic peptide bonds in oligopeptides. Acts as a regulatory subunit for PP2A-like phosphatases modulating their activity or substrate specificity, probably by inducing a conformational change in the catalytic subunit, a direct target of the PPIase. Can reactivate inactive phosphatase PP2A-phosphatase methylesterase complexes (PP2Ai) in presence of ATP and Mg(2+) by dissociating the inactive form from the complex. The chain is Serine/threonine-protein phosphatase 2A activator 2 (RRD2) from Candida glabrata (strain ATCC 2001 / BCRC 20586 / JCM 3761 / NBRC 0622 / NRRL Y-65 / CBS 138) (Yeast).